A 314-amino-acid polypeptide reads, in one-letter code: Formimidoylglutamase (314 aa).

Mn(2+) contacts are provided by His127, Asp151, His153, Asp155, Asp239, and Asp241.

Belongs to the arginase family. It depends on Mn(2+) as a cofactor.

The enzyme catalyses N-formimidoyl-L-glutamate + H2O = formamide + L-glutamate. It participates in amino-acid degradation; L-histidine degradation into L-glutamate; L-glutamate from N-formimidoyl-L-glutamate (hydrolase route): step 1/1. Catalyzes the conversion of N-formimidoyl-L-glutamate to L-glutamate and formamide. The chain is Formimidoylglutamase from Corynebacterium efficiens (strain DSM 44549 / YS-314 / AJ 12310 / JCM 11189 / NBRC 100395).